The chain runs to 318 residues: Taste receptor type 2 member 60 (318 aa).

The Extracellular portion of the chain corresponds to 1 to 7 (MNGDHMV). Residues 8–28 (LGSSVTDKKAIILVTILLLLR) traverse the membrane as a helical segment. The Cytoplasmic portion of the chain corresponds to 29–40 (LVAIAGNGFITA). Residues 41 to 61 (ALGVEWVLRRMLLPCDKLLVS) traverse the membrane as a helical segment. At 62-88 (LGASRFCLQSVVMGKTIYVFLHPMAFP) the chain is on the extracellular side. Residues 89–109 (YNPVLQFLAFQWDFLNAATLW) form a helical membrane-spanning segment. The Cytoplasmic segment spans residues 110–128 (SSTWLSVFYCVKIATFTHP). Residues 129–149 (VFFWLKHKLSGWLPWMLFSSV) traverse the membrane as a helical segment. At 150–183 (GLSSFTTILFFIGNHRMYQNYLRNHLQPWNVTGD) the chain is on the extracellular side. Asn179 carries an N-linked (GlcNAc...) asparagine glycan. Residues 184–204 (SIRSYCEKFYLFPLKMITWTM) form a helical membrane-spanning segment. At 205–234 (PTAVFFICMILLITSLGRHRKKALLTTSGF) the chain is on the cytoplasmic side. A helical membrane pass occupies residues 235-255 (REPSVQAHIKALLALLSFAML). The Extracellular segment spans residues 256–264 (FISYFLSLV). The chain crosses the membrane as a helical span at residues 265 to 285 (FSAAGIFPPLDFKFWVWESVI). Residues 286–318 (YLCAAVHPIILLFSNCRLRAVLKSRRSSRCGTP) lie on the Cytoplasmic side of the membrane.

It belongs to the G-protein coupled receptor T2R family. Expressed in subsets of taste receptor cells of the tongue and exclusively in gustducin-positive cells.

It is found in the membrane. Its function is as follows. Receptor that may play a role in the perception of bitterness and is gustducin-linked. May play a role in sensing the chemical composition of the gastrointestinal content. The activity of this receptor may stimulate alpha gustducin, mediate PLC-beta-2 activation and lead to the gating of TRPM5. The polypeptide is Taste receptor type 2 member 60 (TAS2R60) (Homo sapiens (Human)).